Reading from the N-terminus, the 355-residue chain is MTELKNDRYLRALLKQPVDYTPVWMMRQAGRYLPEYKATRAEAGDFMSLCKNAGLASEVTLQPLRRFPLDAAILFSDILTIPDAMGLGLYFEAGEGPKFERPITCKADVDKIGIPDPEGELQYVMNAVRQIRKDLKGEVPLIGFSGSPWTLATYMVEGGSSKAFTKIKKMMYAEPAILHLLLDKLADTVIEYLNAQIKAGAQSVMVFDTWGGVLTPRDYNEFSLRYMHKIVDALIRENEGRRVPVTLFTKNGGMWLEQIAATGCDAIGLDWTINIADAKKRIGDKVALQGNMDPSILYAQPERIRQEVSTILEGFGNEGTGHVFNLGHGIHLDVPPENAGVFVDAVHELSKPYHK.

Residues 27–31 (RQAGR), aspartate 77, tyrosine 154, threonine 209, and histidine 328 contribute to the substrate site.

The protein belongs to the uroporphyrinogen decarboxylase family. Homodimer.

It is found in the cytoplasm. The catalysed reaction is uroporphyrinogen III + 4 H(+) = coproporphyrinogen III + 4 CO2. Its pathway is porphyrin-containing compound metabolism; protoporphyrin-IX biosynthesis; coproporphyrinogen-III from 5-aminolevulinate: step 4/4. In terms of biological role, catalyzes the decarboxylation of four acetate groups of uroporphyrinogen-III to yield coproporphyrinogen-III. The sequence is that of Uroporphyrinogen decarboxylase from Aliivibrio salmonicida (strain LFI1238) (Vibrio salmonicida (strain LFI1238)).